The primary structure comprises 253 residues: Tryptophan synthase alpha chain (253 aa).

Active-site proton acceptor residues include Glu-46 and Asp-57.

It belongs to the TrpA family. In terms of assembly, tetramer of two alpha and two beta chains.

The catalysed reaction is (1S,2R)-1-C-(indol-3-yl)glycerol 3-phosphate + L-serine = D-glyceraldehyde 3-phosphate + L-tryptophan + H2O. Its pathway is amino-acid biosynthesis; L-tryptophan biosynthesis; L-tryptophan from chorismate: step 5/5. In terms of biological role, the alpha subunit is responsible for the aldol cleavage of indoleglycerol phosphate to indole and glyceraldehyde 3-phosphate. This Dictyoglomus turgidum (strain DSM 6724 / Z-1310) protein is Tryptophan synthase alpha chain.